The primary structure comprises 148 residues: Early glycoprotein GP48 (148 aa).

Residues M1–A21 form the signal peptide. N22, N44, N49, N57, N65, N104, N108, N118, N135, and N144 each carry an N-linked (GlcNAc...) asparagine; by host glycan.

It belongs to the RL11 family. In terms of processing, N-glycosylated and possibly O-glycosylated.

It localises to the virion membrane. This Homo sapiens (Human) protein is Early glycoprotein GP48 (UL4).